We begin with the raw amino-acid sequence, 851 residues long: Beta-galactosidase 3 (851 aa).

The first 29 residues, 1–29 (MAGASSYFSLRRLLLLLLPLVPLLGATTA), serve as a signal peptide directing secretion. N-linked (GlcNAc...) asparagine glycosylation occurs at Asn35. The Proton donor role is filled by Glu194. The Nucleophile role is filled by Glu263. 4 N-linked (GlcNAc...) asparagine glycosylation sites follow: Asn361, Asn475, Asn528, and Asn533. The region spanning 765–851 (GRDAAKVQLS…KTLAIEADCS (87 aa)) is the SUEL-type lectin domain.

Belongs to the glycosyl hydrolase 35 family.

The protein resides in the secreted. Its subcellular location is the extracellular space. The protein localises to the apoplast. It catalyses the reaction Hydrolysis of terminal non-reducing beta-D-galactose residues in beta-D-galactosides.. The polypeptide is Beta-galactosidase 3 (Oryza sativa subsp. japonica (Rice)).